A 1105-amino-acid chain; its full sequence is Mediator of RNA polymerase II transcription subunit 14 (1105 aa).

Residues 28-48 (ASQQANGGIYRNGIGKKSHSP) form a disordered region.

Belongs to the Mediator complex subunit 14 family. As to quaternary structure, component of the Mediator complex.

It localises to the nucleus. Functionally, component of the Mediator complex, a coactivator involved in the regulated transcription of nearly all RNA polymerase II-dependent genes. Mediator functions as a bridge to convey information from gene-specific regulatory proteins to the basal RNA polymerase II transcription machinery. Mediator is recruited to promoters by direct interactions with regulatory proteins and serves as a scaffold for the assembly of a functional preinitiation complex with RNA polymerase II and the general transcription factors. This is Mediator of RNA polymerase II transcription subunit 14 (RGR1) from Coccidioides immitis (strain RS) (Valley fever fungus).